We begin with the raw amino-acid sequence, 90 residues long: uncharacterized protein (90 aa).

This is an uncharacterized protein from Escherichia coli O157:H7.